A 426-amino-acid chain; its full sequence is Histidinol dehydrogenase (426 aa).

Y123, Q185, and N208 together coordinate NAD(+). 3 residues coordinate substrate: S231, Q253, and H256. Zn(2+) contacts are provided by Q253 and H256. Active-site proton acceptor residues include E321 and H322. Substrate is bound by residues H322, D355, E409, and H414. D355 serves as a coordination point for Zn(2+). H414 serves as a coordination point for Zn(2+).

It belongs to the histidinol dehydrogenase family. The cofactor is Zn(2+).

The enzyme catalyses L-histidinol + 2 NAD(+) + H2O = L-histidine + 2 NADH + 3 H(+). Its pathway is amino-acid biosynthesis; L-histidine biosynthesis; L-histidine from 5-phospho-alpha-D-ribose 1-diphosphate: step 9/9. Its function is as follows. Catalyzes the sequential NAD-dependent oxidations of L-histidinol to L-histidinaldehyde and then to L-histidine. This Bacillus licheniformis (strain ATCC 14580 / DSM 13 / JCM 2505 / CCUG 7422 / NBRC 12200 / NCIMB 9375 / NCTC 10341 / NRRL NRS-1264 / Gibson 46) protein is Histidinol dehydrogenase.